We begin with the raw amino-acid sequence, 418 residues long: Tyrosine--tRNA ligase (418 aa).

Tyr34 lines the L-tyrosine pocket. The 'HIGH' region signature appears at 39–48; sequence PTGDSMHIGH. Residues Tyr166 and Gln170 each contribute to the L-tyrosine site. The 'KMSKS' region signature appears at 228-232; the sequence is KFGKT. An ATP-binding site is contributed by Lys231. Residues 350–418 enclose the S4 RNA-binding domain; the sequence is QNIVLWLVDA…KKRYFLAHVK (69 aa).

Belongs to the class-I aminoacyl-tRNA synthetase family. TyrS type 1 subfamily. As to quaternary structure, homodimer.

It localises to the cytoplasm. It catalyses the reaction tRNA(Tyr) + L-tyrosine + ATP = L-tyrosyl-tRNA(Tyr) + AMP + diphosphate + H(+). Functionally, catalyzes the attachment of tyrosine to tRNA(Tyr) in a two-step reaction: tyrosine is first activated by ATP to form Tyr-AMP and then transferred to the acceptor end of tRNA(Tyr). The chain is Tyrosine--tRNA ligase from Lactiplantibacillus plantarum (strain ATCC BAA-793 / NCIMB 8826 / WCFS1) (Lactobacillus plantarum).